We begin with the raw amino-acid sequence, 255 residues long: 5'-nucleotidase SurE (255 aa).

Residues Asp8, Asp9, Ser40, and Asn93 each contribute to the a divalent metal cation site.

This sequence belongs to the SurE nucleotidase family. A divalent metal cation serves as cofactor.

The protein localises to the cytoplasm. The enzyme catalyses a ribonucleoside 5'-phosphate + H2O = a ribonucleoside + phosphate. Functionally, nucleotidase that shows phosphatase activity on nucleoside 5'-monophosphates. The sequence is that of 5'-nucleotidase SurE from Bradyrhizobium diazoefficiens (strain JCM 10833 / BCRC 13528 / IAM 13628 / NBRC 14792 / USDA 110).